Here is a 275-residue protein sequence, read N- to C-terminus: NADPH-dependent 7-cyano-7-deazaguanine reductase (275 aa).

81 to 83 is a substrate binding site; sequence VES. 83-84 contacts NADPH; that stretch reads SK. The active-site Thioimide intermediate is C182. D189 functions as the Proton donor in the catalytic mechanism. Position 221-222 (221-222) interacts with substrate; that stretch reads HE. 250-251 contributes to the NADPH binding site; sequence RG.

It belongs to the GTP cyclohydrolase I family. QueF type 2 subfamily. In terms of assembly, homodimer.

Its subcellular location is the cytoplasm. It catalyses the reaction 7-aminomethyl-7-carbaguanine + 2 NADP(+) = 7-cyano-7-deazaguanine + 2 NADPH + 3 H(+). Its pathway is tRNA modification; tRNA-queuosine biosynthesis. Functionally, catalyzes the NADPH-dependent reduction of 7-cyano-7-deazaguanine (preQ0) to 7-aminomethyl-7-deazaguanine (preQ1). The chain is NADPH-dependent 7-cyano-7-deazaguanine reductase from Polaromonas sp. (strain JS666 / ATCC BAA-500).